Consider the following 286-residue polypeptide: Polyamine aminopropyltransferase (286 aa).

The region spanning 3-240 (DLWYSESHAD…GHWLFGFASK (238 aa)) is the PABS domain. S-methyl-5'-thioadenosine is bound at residue glutamine 32. 2 residues coordinate spermidine: histidine 63 and aspartate 87. S-methyl-5'-thioadenosine-binding positions include glutamate 107 and 139-140 (DG). The active-site Proton acceptor is aspartate 158. 158-161 (DSTD) is a spermidine binding site. An S-methyl-5'-thioadenosine-binding site is contributed by proline 165.

The protein belongs to the spermidine/spermine synthase family. As to quaternary structure, homodimer or homotetramer.

It is found in the cytoplasm. It carries out the reaction S-adenosyl 3-(methylsulfanyl)propylamine + putrescine = S-methyl-5'-thioadenosine + spermidine + H(+). It functions in the pathway amine and polyamine biosynthesis; spermidine biosynthesis; spermidine from putrescine: step 1/1. Catalyzes the irreversible transfer of a propylamine group from the amino donor S-adenosylmethioninamine (decarboxy-AdoMet) to putrescine (1,4-diaminobutane) to yield spermidine. This Clostridium acetobutylicum (strain ATCC 824 / DSM 792 / JCM 1419 / IAM 19013 / LMG 5710 / NBRC 13948 / NRRL B-527 / VKM B-1787 / 2291 / W) protein is Polyamine aminopropyltransferase.